The chain runs to 584 residues: ATP-dependent ubiquitin transferase-like protein Cap2 (584 aa).

Residues 1-137 are E2-like domain; that stretch reads MKQELHHTLL…SGTSNDVELE (137 aa). C90 acts as the For E2-like domain in catalysis. Residues 138 to 338 form a linker domain region; sequence GEFSAYWQSE…LLSRNQSRPD (201 aa). Residues 339–584 are adenylation plus E1-like domain; that stretch reads VGNLSQKRIA…RFSGCNICDE (246 aa). C522 serves as the catalytic For E1-like domain.

In the C-terminal section; belongs to the HesA/MoeB/ThiF family. In terms of assembly, interacts with CD-NTase DncV in the presence and absence of phage T2. A Cap2 dimer is bound on either side by a DncV monomer.

Functionally, CD-NTase priming component of a CBASS antiviral system. CBASS (cyclic oligonucleotide-based antiphage signaling system) provides immunity against bacteriophages. The CD-NTase protein (DncV) synthesizes cyclic nucleotides in response to infection; these serve as specific second messenger signals. The signals activate a diverse range of effectors, leading to bacterial cell death and thus abortive phage infection. A type II-A(GA) CBASS system. In terms of biological role, primes DncV; acts as a protein transferase, conjugating DncV, the CD-NTase, to unidentified target(s) in the cell via an E1-E2 ubiquitin transferase-like mechanism. During the conjugation reaction DncV is probably transiently attached to AMP. Protein conjugation requires ATP. Its function is as follows. Protects E.coli against phage infection. When the CBASS operon (capV-dncV-cap2-cap3) is introduced in E.coli MG1655 there is about 100-fold protection against phages P1 and T2. When the operon is introduced in E.coli MG1655 there is a more than 10(3) decrease in the efficiency of T2 plaque formation. Protects 100-fold against phage T5, offers no protection against T7. When the operon is introduced in E.coli MG1655 it protects against phages T2, T4, T5 and T6. Another paper shows the operon confers protection against phages P1, T2, T5 and T6 but not T4 or lambda. In Vibrio cholerae serotype O1 (strain ATCC 39315 / El Tor Inaba N16961), this protein is ATP-dependent ubiquitin transferase-like protein Cap2.